Here is a 210-residue protein sequence, read N- to C-terminus: Ras-related protein RABC2a (210 aa).

A GTP-binding site is contributed by 20-27 (GDSGVGKS). The Effector region signature appears at 41–49 (LAPTIGVDF). Residues 67-71 (DTAGQ), 127-130 (NKVD), and 157-158 (SA) each bind GTP. 2 S-geranylgeranyl cysteine lipidation sites follow: cysteine 208 and cysteine 209.

This sequence belongs to the small GTPase superfamily. Rab family. In terms of assembly, interacts with XI-2/MYA2.

The protein resides in the cell membrane. It is found in the cytoplasm. Intracellular vesicle trafficking and protein transport. The chain is Ras-related protein RABC2a (RABC2A) from Arabidopsis thaliana (Mouse-ear cress).